The sequence spans 130 residues: Small ribosomal subunit protein uS9 (130 aa).

The protein belongs to the universal ribosomal protein uS9 family.

The sequence is that of Small ribosomal subunit protein uS9 from Histophilus somni (strain 129Pt) (Haemophilus somnus).